Reading from the N-terminus, the 174-residue chain is Large ribosomal subunit protein uL5 (174 aa).

Belongs to the universal ribosomal protein uL5 family. Part of the 50S ribosomal subunit; contacts the 5S rRNA and probably tRNA. Forms a bridge to the 30S subunit in the 70S ribosome.

Its function is as follows. This is one of the proteins that bind and probably mediate the attachment of the 5S RNA into the large ribosomal subunit, where it forms part of the central protuberance. In the 70S ribosome it contacts protein S13 of the 30S subunit (bridge B1b), connecting the 2 subunits; this bridge is implicated in subunit movement. May contact the P site tRNA; the 5S rRNA and some of its associated proteins might help stabilize positioning of ribosome-bound tRNAs. This chain is Large ribosomal subunit protein uL5, found in Halorubrum lacusprofundi (strain ATCC 49239 / DSM 5036 / JCM 8891 / ACAM 34).